A 27-amino-acid polypeptide reads, in one-letter code: Ganodermin (27 aa).

Its function is as follows. Has antifungal activity against B.cinera, F.oxysporum and P.piricola with IC(50) values of 15.2 uM, 12.4 uM and 18.1 uM, respectively. Lacks hemagglutinating activity towards rabbit erythrocytes. Lacks deoxyribonuclease, ribonuclease and protease inhibitory activities. This is Ganodermin from Ganoderma lucidum (Ling zhi medicinal fungus).